The sequence spans 432 residues: Ribosome biogenesis protein WDR12 homolog (432 aa).

The interval 13–97 (LQIRLVALNK…ESVIEVVYFQ (85 aa)) is ubiquitin-like (UBL) domain. 7 WD repeats span residues 109–146 (LHSD…YAIF), 148–190 (GHES…KSVE), 197–236 (GHTQ…KDDD), 265–303 (GHTD…NKSD), 305–345 (NVNK…DQTV), 352–392 (SHKN…APLY), and 396–432 (GHED…AQRS).

This sequence belongs to the WD repeat WDR12/YTM1 family.

It localises to the nucleus. Its subcellular location is the nucleolus. It is found in the nucleoplasm. Its function is as follows. Required for maturation of ribosomal RNAs and formation of the large ribosomal subunit. The sequence is that of Ribosome biogenesis protein WDR12 homolog from Trichoplax adhaerens (Trichoplax reptans).